The chain runs to 758 residues: MVGGRRLGKRGSPLLRWSVKQESFSHGFSKSDLQALSSICDAIMPPVPLESLNLEMKLKVLRNDALLSFFKSSSSESHVRPDEVAELLATKAIPLTVLVVRIVLRILTFRLGTLLLCGLVCLDKKHWPFLLKFSEMSLEKREKVLQRWNTQWYNPLARIGFMMIKAIFLFYYFTWTNENSENPVWDAINYSVEIGENEDMEQKERPLDEGIIETAKEDEMTIKQRMINKGLKVTEDRERDTYKIECDAVVVGSGCGGGVAAAILAKSGLRVVVIEKGNYFAPRDYSALEGPSMFELFESNSLMMTHDGRFRFMAGSTVGGGSVVNWAASLKTPDAIIEEWSVHRGISIYSSEKYKAAMGIVCKRLGVTEKIIREGFQNQILRKGCEKLGLDVTIVPRNSTEKHYCGSCSYGCPTGEKRGTDSTWLVDAVNNNAVILTQCKAEKLILADNDANKREESGRRKRCLGVAASLSHQTRKKLQINAKVTIVACGSLKTPGLLASSGLKNSNISRGLHIHPIMMAWGYFPEKNSELEGAAHEGEIVTSLHYVHPMDSTTPNITLETPAIGPGTFAALTPWVSGSDMKERMAKYARTAHIFAMVRDEGVGEVKGDIVKYRLTKADEENLTIGLKQALRILVAAGAAEVGTYRSDGQRMKCDGIKQKDLEAFLDTVNAPPGVVSMSKHWTQSFTAHQIGCCRMGATEKEGAIDGKGESWEAEDLYVCDASVLPTALGVNPMITVQSTAYCISNRIAELMKKRKKD.

2 consecutive transmembrane segments (helical) span residues 102 to 122 and 155 to 175; these read IVLR…LVCL and PLAR…YFTW. 246 to 261 provides a ligand contact to FAD; sequence CDAVVVGSGCGGGVAA. His-689 functions as the Proton acceptor in the catalytic mechanism.

The protein belongs to the GMC oxidoreductase family.

It is found in the membrane. The catalysed reaction is a long-chain primary fatty alcohol + O2 = a long-chain fatty aldehyde + H2O2. Its function is as follows. Long-chain fatty alcohol oxidase involved in the omega-oxidation pathway of lipid degradation. The chain is Long-chain-alcohol oxidase FAO1 (FAO1) from Arabidopsis thaliana (Mouse-ear cress).